The chain runs to 177 residues: Dual-action ribosomal maturation protein DarP (177 aa).

The disordered stretch occupies residues 1–26 (MKIVGDSEHFKQPYDSDEEYVSKTED).

It belongs to the DarP family.

It localises to the cytoplasm. In terms of biological role, member of a network of 50S ribosomal subunit biogenesis factors which assembles along the 30S-50S interface, preventing incorrect 23S rRNA structures from forming. Promotes peptidyl transferase center (PTC) maturation. This Shewanella sp. (strain MR-4) protein is Dual-action ribosomal maturation protein DarP.